A 149-amino-acid chain; its full sequence is Transthyretin (149 aa).

Residues Met-1–Ala-22 form the signal peptide. Position 32 is a sulfocysteine (Cys-32). Position 37 (Lys-37) interacts with L-thyroxine. Residue Glu-64 is modified to 4-carboxyglutamate. L-thyroxine is bound by residues Glu-76 and Ser-139.

The protein belongs to the transthyretin family. Homotetramer. Dimer of dimers. In the homotetramer, subunits assemble around a central channel that can accommodate two ligand molecules. Interacts with RBP4. In terms of processing, sulfonation of the reactive cysteine Cys-32 enhances the stability of the native conformation of TTR, avoiding misassembly of the protein leading to amyloid formation. In terms of tissue distribution, detected in liver.

Its subcellular location is the secreted. In terms of biological role, thyroid hormone-binding protein. Probably transports thyroxine from the bloodstream to the brain. This chain is Transthyretin (TTR), found in Macropus giganteus (Eastern gray kangaroo).